We begin with the raw amino-acid sequence, 754 residues long: RNA-directed RNA polymerase catalytic subunit (754 aa).

Short sequence motifs (nuclear localization signal) lie at residues 189–197 (MVRREKDKR) and 205–218 (KVPVMGIDSIKHDE). Residues 251-258 (RPFSKIVE) are promoter-binding site. The RdRp catalytic domain occupies 288–484 (VTSLNARMNS…GINMSLEKSY (197 aa)).

The protein belongs to the influenza viruses polymerase PB1 family. As to quaternary structure, influenza RNA polymerase is composed of three subunits: PB1, PB2 and PA. Interacts (via N-terminus) with PA (via C-terminus). Interacts (via C-terminus) with PB2 (via N-terminus); this interaction is essential for transcription initiation. In terms of processing, phosphorylated by host PRKCA.

It localises to the host nucleus. Its subcellular location is the host cytoplasm. The enzyme catalyses RNA(n) + a ribonucleoside 5'-triphosphate = RNA(n+1) + diphosphate. Its function is as follows. RNA-dependent RNA polymerase which is responsible for replication and transcription of virus RNA segments. The transcription of viral mRNAs occurs by a unique mechanism called cap-snatching. 5' methylated caps of cellular mRNAs are cleaved after 10-13 nucleotides by PA. In turn, these short capped RNAs are used as primers by PB1 for transcription of viral mRNAs. During virus replication, PB1 initiates RNA synthesis and copy vRNA into complementary RNA (cRNA) which in turn serves as a template for the production of more vRNAs. The chain is RNA-directed RNA polymerase catalytic subunit from Homo sapiens (Human).